The following is a 90-amino-acid chain: uncharacterized protein (90 aa).

3 helical membrane-spanning segments follow: residues 5–27, 40–62, and 67–89; these read FDILTLILTAIYLLIGGGFIIYI, IYLSIGFFLLIIGASLPVLTFVA, and MSVVVVAILMQIAGLSSIFYSIV.

The protein resides in the cell membrane. This is an uncharacterized protein from Archaeoglobus fulgidus (strain ATCC 49558 / DSM 4304 / JCM 9628 / NBRC 100126 / VC-16).